The chain runs to 129 residues: MSYKFPNYLRYADTHEYVKEENGLFKIGVSEFAIDQLGDIVFVELVEKGTNLQKGETFGTIESVKAVEEVYLPFSGEVISVNEGVIDNPEILQNDPIGDGWLLIIKSESNVLLDELMNSDEYKSKVVPN.

The Lipoyl-binding domain maps to 24–106 (LFKIGVSEFA…IGDGWLLIIK (83 aa)). At Lys-65 the chain carries N6-lipoyllysine.

It belongs to the GcvH family. As to quaternary structure, the glycine cleavage system is composed of four proteins: P, T, L and H. The cofactor is (R)-lipoate.

Functionally, the glycine cleavage system catalyzes the degradation of glycine. The H protein shuttles the methylamine group of glycine from the P protein to the T protein. The polypeptide is Glycine cleavage system H protein (Prochlorococcus marinus subsp. pastoris (strain CCMP1986 / NIES-2087 / MED4)).